Here is a 535-residue protein sequence, read N- to C-terminus: Pre-mRNA-splicing factor SLU7-A (535 aa).

The tract at residues 21 to 44 (EEARKAGLAPAEVDEDGKEINPHI) is disordered. The CCHC-type zinc finger occupies 96–109 (CQNCGAMTHTAKAC). Positions 176-190 (LKKLEEKNNNEKGDD) are enriched in basic and acidic residues. Disordered stretches follow at residues 176–204 (LKKL…DLRV) and 489–508 (EDLS…NVKY). Acidic residues predominate over residues 191–203 (ANSDGEEDEDDLR). Ser193 carries the phosphoserine modification. The short motif at 486 to 493 (LKKEDLSR) is the Nuclear localization signal element. Basic and acidic residues predominate over residues 489–501 (EDLSRREEKDERK).

It belongs to the SLU7 family. In terms of tissue distribution, mainly expressed in tissues undergoing cell proliferation, particularly in lateral organs.

Its subcellular location is the nucleus. Participates in the second catalytic step of pre-mRNA splicing, when the free hydroxyl group of exon I attacks the 3'-splice site to generate spliced mRNA and the excised lariat intron. Together with SMP2, involved in the timing of cell cycle arrest during leaf development, in a STRUWWELPETER (SWP) dependent manner; promotes cell proliferation in developing organs. In Arabidopsis thaliana (Mouse-ear cress), this protein is Pre-mRNA-splicing factor SLU7-A.